The primary structure comprises 209 residues: Large ribosomal subunit protein uL3 (209 aa).

The segment at 127 to 164 (NFSGGQRTHGQSDRLRAPGSVGGASDPSRTFKGTKMGG) is disordered.

It belongs to the universal ribosomal protein uL3 family. As to quaternary structure, part of the 50S ribosomal subunit. Forms a cluster with proteins L14 and L19.

Functionally, one of the primary rRNA binding proteins, it binds directly near the 3'-end of the 23S rRNA, where it nucleates assembly of the 50S subunit. This is Large ribosomal subunit protein uL3 from Chlorobium phaeobacteroides (strain BS1).